We begin with the raw amino-acid sequence, 463 residues long: uncharacterized protein (463 aa).

A TRAM domain is found at Val-9 to Lys-67. 4 residues coordinate [4Fe-4S] cluster: Cys-80, Cys-86, Cys-89, and Cys-169. Gln-293, Tyr-322, Asp-343, and Asp-391 together coordinate S-adenosyl-L-methionine. Cys-418 functions as the Nucleophile in the catalytic mechanism.

It belongs to the class I-like SAM-binding methyltransferase superfamily. RNA M5U methyltransferase family.

This is an uncharacterized protein from Halalkalibacterium halodurans (strain ATCC BAA-125 / DSM 18197 / FERM 7344 / JCM 9153 / C-125) (Bacillus halodurans).